A 217-amino-acid chain; its full sequence is Probable transaldolase (217 aa).

Lys83 (schiff-base intermediate with substrate) is an active-site residue.

This sequence belongs to the transaldolase family. Type 3B subfamily.

Its subcellular location is the cytoplasm. The enzyme catalyses D-sedoheptulose 7-phosphate + D-glyceraldehyde 3-phosphate = D-erythrose 4-phosphate + beta-D-fructose 6-phosphate. The protein operates within carbohydrate degradation; pentose phosphate pathway; D-glyceraldehyde 3-phosphate and beta-D-fructose 6-phosphate from D-ribose 5-phosphate and D-xylulose 5-phosphate (non-oxidative stage): step 2/3. In terms of biological role, transaldolase is important for the balance of metabolites in the pentose-phosphate pathway. This Fervidobacterium nodosum (strain ATCC 35602 / DSM 5306 / Rt17-B1) protein is Probable transaldolase.